A 958-amino-acid chain; its full sequence is Translation initiation factor IF-2 (958 aa).

A compositionally biased stretch (low complexity) spans 50–67; sequence FKPAAAPKVEAKPAAPKV. Disordered stretches follow at residues 50–224 and 288–374; these read FKPA…RIDF and EVVP…HELP. 3 stretches are compositionally biased toward basic and acidic residues: residues 68 to 89, 96 to 118, and 138 to 153; these read SAEK…EEAK, SAEK…EAKP, and FKAE…AERR. Over residues 157–169 the composition is skewed to low complexity; it reads KGNNRDQQQNGNR. Composition is skewed to basic and acidic residues over residues 185–195 and 290–323; these read RDNRRFNDQAK and VPEK…DGPR. Residues 337–346 are compositionally biased toward low complexity; sequence NQKNSNWNNN. Residues 365-374 are compositionally biased toward basic and acidic residues; sequence VTERKFHELP. The tr-type G domain maps to 460–627; that stretch reads ERPPVVTIMG…TVLLVAEIQE (168 aa). The interval 469 to 476 is G1; sequence GHVDHGKT. 469–476 contacts GTP; the sequence is GHVDHGKT. The G2 stretch occupies residues 494-498; the sequence is GITQH. The G3 stretch occupies residues 515-518; the sequence is DTPG. Residues 515-519 and 569-572 contribute to the GTP site; these read DTPGH and NKID. Residues 569-572 form a G4 region; the sequence is NKID. Residues 605–607 form a G5 region; it reads SAK.

Belongs to the TRAFAC class translation factor GTPase superfamily. Classic translation factor GTPase family. IF-2 subfamily.

It is found in the cytoplasm. Its function is as follows. One of the essential components for the initiation of protein synthesis. Protects formylmethionyl-tRNA from spontaneous hydrolysis and promotes its binding to the 30S ribosomal subunits. Also involved in the hydrolysis of GTP during the formation of the 70S ribosomal complex. This is Translation initiation factor IF-2 from Streptococcus pneumoniae serotype 4 (strain ATCC BAA-334 / TIGR4).